Reading from the N-terminus, the 308-residue chain is Porphobilinogen deaminase (308 aa).

Cys-241 carries the post-translational modification S-(dipyrrolylmethanemethyl)cysteine.

Belongs to the HMBS family. Monomer. The cofactor is dipyrromethane.

The enzyme catalyses 4 porphobilinogen + H2O = hydroxymethylbilane + 4 NH4(+). The protein operates within porphyrin-containing compound metabolism; protoporphyrin-IX biosynthesis; coproporphyrinogen-III from 5-aminolevulinate: step 2/4. Tetrapolymerization of the monopyrrole PBG into the hydroxymethylbilane pre-uroporphyrinogen in several discrete steps. The polypeptide is Porphobilinogen deaminase (Staphylococcus aureus (strain Newman)).